The sequence spans 215 residues: Pyrrolidone-carboxylate peptidase (215 aa).

Residues Glu-80, Cys-143, and His-167 contribute to the active site.

Belongs to the peptidase C15 family. As to quaternary structure, homotetramer.

Its subcellular location is the cytoplasm. It carries out the reaction Release of an N-terminal pyroglutamyl group from a polypeptide, the second amino acid generally not being Pro.. In terms of biological role, removes 5-oxoproline from various penultimate amino acid residues except L-proline. The sequence is that of Pyrrolidone-carboxylate peptidase from Bacillus cereus (strain 03BB102).